The chain runs to 419 residues: Transcription termination factor Rho (419 aa).

In terms of domain architecture, Rho RNA-BD spans Glu48 to Arg123. 3 RNA-binding regions span residues Gly61–Arg66, Asp78–Tyr80, and Glu108–Tyr110. ATP-binding positions include Gly169–Gly174, Lys181–Ile186, and Arg212. The RNA-binding 2 stretch occupies residues Val284–Gly288.

It belongs to the Rho family. As to quaternary structure, homohexamer. The homohexamer assembles into an open ring structure.

In terms of biological role, facilitates transcription termination by a mechanism that involves Rho binding to the nascent RNA, activation of Rho's RNA-dependent ATPase activity, and release of the mRNA from the DNA template. The chain is Transcription termination factor Rho from Pseudomonas fluorescens biotype C.